Here is an 87-residue protein sequence, read N- to C-terminus: Neurotoxin LmNaTx64.1 (87 aa).

The N-terminal stretch at 1–18 is a signal peptide; it reads MKILFLIILTAFFIGVHC. Residues 19 to 85 form the LCN-type CS-alpha/beta domain; that stretch reads KHGYPIIRAG…TWSRATNKCK (67 aa). 4 disulfide bridges follow: Cys33/Cys84, Cys37/Cys58, Cys44/Cys65, and Cys48/Cys67. Residue Cys84 is modified to Cysteine amide.

The protein belongs to the long (4 C-C) scorpion toxin superfamily. Sodium channel inhibitor family. Beta subfamily. In terms of tissue distribution, expressed by the venom gland.

Its subcellular location is the secreted. In terms of biological role, binds voltage-independently at site-4 of sodium channels (Nav) and shift the voltage of activation toward more negative potentials thereby affecting sodium channel activation and promoting spontaneous and repetitive firing. The chain is Neurotoxin LmNaTx64.1 from Lychas mucronatus (Chinese swimming scorpion).